Consider the following 516-residue polypeptide: MTDQNWKESLNIPQKDTRPQTEDVLNTKGKTFEDFPLKRELLMGIFEAGFEKPSPVQEESIPMALAGRDILARAKNGTGKTASFVIPCLQQARPKVNKIQALILVPTRELALQTSQVVRTLGKHLGLQCMVTTGGTSLRDDILRLNDPVHVLVGTPGRVLDLASRKVADLSECPLFVMDEADKMLSREFKGIIEQILAFFPTTRQSLLFSATFPLAVKSFMDQHLTKPYEINLMDELTLRGISQFYAFVEEKQKLHCLNTLFSKLQINQAIIFCNSTNRVELLAKKITELGYSCYYSHAKMPQHARNKVFHEFRQGKVRVLVCSDLLTRGIDIQAVNVVINFDFPKTAETYLHRIGRSGRFGHLGLAINLMSWNDRYNLYKIEQELGTEIKPIPATIDKSLYVAENEAAVPRPFKIDQLPKGNETVHKKSGYEYKGQPEVSSNVAGMPQQVPNGPVPPQQVNPSQGNQMPPQQYPGYPPQYQQQMPPQFNGYPPQQQYASPQYQQPQPQSQQQQFQ.

Over residues 1 to 14 (MTDQNWKESLNIPQ) the composition is skewed to polar residues. The disordered stretch occupies residues 1-22 (MTDQNWKESLNIPQKDTRPQTE). Residues 30–58 (KTFEDFPLKRELLMGIFEAGFEKPSPVQE) carry the Q motif motif. The Helicase ATP-binding domain occupies 61–231 (IPMALAGRDI…DQHLTKPYEI (171 aa)). 74 to 81 (AKNGTGKT) contributes to the ATP binding site. Residues 179 to 182 (DEAD) carry the DEAD box motif. Residues 241–401 (GISQFYAFVE…PIPATIDKSL (161 aa)) form the Helicase C-terminal domain. A disordered region spans residues 436 to 516 (GQPEVSSNVA…QPQSQQQQFQ (81 aa)). 2 stretches are compositionally biased toward low complexity: residues 461–471 (VNPSQGNQMPP) and 479–516 (PQYQQQMPPQFNGYPPQQQYASPQYQQPQPQSQQQQFQ).

Belongs to the DEAD box helicase family. DDX6/DHH1 subfamily.

It is found in the cytoplasm. Its subcellular location is the P-body. It carries out the reaction ATP + H2O = ADP + phosphate + H(+). Functionally, ATP-dependent RNA helicase involved in mRNA turnover, and more specifically in mRNA decapping by activating the decapping enzyme DCP1. Is involved in G1/S DNA-damage checkpoint recovery, probably through the regulation of the translational status of a subset of mRNAs. May also have a role in translation and mRNA nuclear export. The chain is ATP-dependent RNA helicase DHH1 (DHH1) from Debaryomyces hansenii (strain ATCC 36239 / CBS 767 / BCRC 21394 / JCM 1990 / NBRC 0083 / IGC 2968) (Yeast).